The chain runs to 255 residues: Putative deoxyribonuclease tatdn3-B (255 aa).

Zn(2+)-binding residues include His-11, His-13, Glu-106, His-129, His-152, and Asp-199.

The protein belongs to the metallo-dependent hydrolases superfamily. TatD-type hydrolase family. Requires Mn(2+) as cofactor. Ca(2+) serves as cofactor. Mg(2+) is required as a cofactor. It depends on Zn(2+) as a cofactor.

The protein resides in the nucleus. With respect to regulation, the 3'-exonuclease activity is sensitive to the metal ion present in the active site, whereas the AP endodeoxyribonuclease activity is observed in a variety of divalent metal cofactors. 3'-exoxonuclease activity is suppressed in the presence of Ca(2+), Zn(2+) and Ni(2+). Exhibits 3'-exonuclease activities and apurinic/apyrimidinic (AP) endonuclease (in vitro). Show preferential AP endonuclease activity on double-stranded DNA substrates and 3'- exonuclease activity on single-stranded DNA. The polypeptide is Putative deoxyribonuclease tatdn3-B (tatdn3-b) (Xenopus laevis (African clawed frog)).